A 163-amino-acid polypeptide reads, in one-letter code: HTH-type transcriptional regulator IscR (163 aa).

The HTH rrf2-type domain occupies 2–131 (RLTSKGRYAV…NNITLGELVN (130 aa)). Positions 28-51 (LADISERQGISLSYLEQLFSRLRK) form a DNA-binding region, H-T-H motif. [2Fe-2S] cluster-binding residues include C92, C98, and C104.

[2Fe-2S] cluster serves as cofactor.

Functionally, regulates the transcription of several operons and genes involved in the biogenesis of Fe-S clusters and Fe-S-containing proteins. This is HTH-type transcriptional regulator IscR from Klebsiella pneumoniae subsp. pneumoniae (strain ATCC 700721 / MGH 78578).